The chain runs to 291 residues: ATP synthase gamma chain (291 aa).

This sequence belongs to the ATPase gamma chain family. In terms of assembly, F-type ATPases have 2 components, CF(1) - the catalytic core - and CF(0) - the membrane proton channel. CF(1) has five subunits: alpha(3), beta(3), gamma(1), delta(1), epsilon(1). CF(0) has three main subunits: a, b and c.

It localises to the cell inner membrane. Its function is as follows. Produces ATP from ADP in the presence of a proton gradient across the membrane. The gamma chain is believed to be important in regulating ATPase activity and the flow of protons through the CF(0) complex. This is ATP synthase gamma chain from Sinorhizobium medicae (strain WSM419) (Ensifer medicae).